Consider the following 398-residue polypeptide: Cholinephosphotransferase 1 (398 aa).

Ala2 carries the N-acetylalanine modification. Residues 2–62 (AAGAGARPAP…LLQWIPLWIA (61 aa)) are Cytoplasmic-facing. Residues 63 to 83 (PNTITLFGLAINLFTTLVLIF) form a helical membrane-spanning segment. Asn64 lines the CDP-choline pocket. Residues 84–93 (YCPTVTEEAP) are Lumenal-facing. Residues 94–118 (YWTYLLCALGLFIYQSLDAIDGKQA) traverse the membrane as a helical segment. The Mg(2+) site is built by Asp111 and Asp114. Arg119 contributes to the CDP-choline binding site. At 119–125 (RRTNSCS) the chain is on the cytoplasmic side. Residues 126–150 (PLGELFDHGCDSLSTVFMAIGASIA) form a helical membrane-spanning segment. Asp132 contributes to the Mg(2+) binding site. His133 functions as the Proton acceptor in the catalytic mechanism. A Mg(2+)-binding site is contributed by Asp136. Residues 151–160 (VRLGTHPDWL) are Lumenal-facing. Residues 161 to 179 (FFCSFVGMFMFYCAHWQTY) traverse the membrane as a helical segment. Residues 180 to 190 (VSGVLRFGRVD) are Cytoplasmic-facing. Residues 191 to 207 (VTEIQVALVIVFLLSTF) form a helical membrane-spanning segment. Topologically, residues 208-222 (GGAMMWDYTIPILEI) are lumenal. A helical membrane pass occupies residues 223-248 (KLKILPVLGVVGGLIFSCSNYFHVIL). The Cytoplasmic segment spans residues 249-265 (HGGVGKNGSTIAGTSVL). Residues 266-281 (SPGLHIGLIIILAIMI) form a helical membrane-spanning segment. Residues 282 to 293 (YKKSATNVFEKH) are Lumenal-facing. The chain crosses the membrane as a helical span at residues 294–316 (PCLYTLMFGCVFAKVAQKLVIAH). Over 317-329 (MTKSELYLQDTVF) the chain is Cytoplasmic. The helical transmembrane segment at 330 to 339 (IGPGLLFLDQ) threads the bilayer. Residues 340–346 (YFNNFID) are Lumenal-facing. A helical transmembrane segment spans residues 347–376 (EYVVLWIAMVITSFDMMIYFSSLCLQISRH). Residues 377–398 (LHLSIFKTSYQQAPEQVHKHID) lie on the Cytoplasmic side of the membrane.

It belongs to the CDP-alcohol phosphatidyltransferase class-I family. Mg(2+) is required as a cofactor. The cofactor is Mn(2+).

It is found in the golgi apparatus membrane. The enzyme catalyses CDP-choline + a 1,2-diacyl-sn-glycerol = a 1,2-diacyl-sn-glycero-3-phosphocholine + CMP + H(+). It catalyses the reaction 1-octadecanoyl-2-(5Z,8Z,11Z,14Z-eicosatetraenoyl)-sn-glycerol + CDP-choline = 1-octadecanoyl-2-(5Z,8Z,11Z,14Z-eicosatetraenoyl)-sn-glycero-3-phosphocholine + CMP + H(+). The catalysed reaction is 1-hexadecanoyl-2-(9Z-octadecenoyl)-sn-glycerol + CDP-choline = 1-hexadecanoyl-2-(9Z-octadecenoyl)-sn-glycero-3-phosphocholine + CMP + H(+). It carries out the reaction 1-hexadecanoyl-2-(4Z,7Z,10Z,13Z,16Z,19Z-docosahexaenoyl)-sn-glycerol + CDP-choline = 1-hexadecanoyl-2-(4Z,7Z,10Z,13Z,16Z,19Z-docosahexaenoyl)-sn-glycero-3-phosphocholine + CMP + H(+). The enzyme catalyses 1,2-dioctanoyl-sn-glycerol + CDP-choline = 1,2-dioctanoyl-sn-glycero-3-phosphocholine + CMP + H(+). It participates in phospholipid metabolism; phosphatidylcholine biosynthesis; phosphatidylcholine from phosphocholine: step 2/2. In terms of biological role, catalyzes the final step of de novo phosphatidylcholine (PC) synthesis, i.e. the transfer of choline phosphate from CDP-choline to the free hydroxyl of a diacylglycerol (DAG), producing a PC. It thereby plays a central role in the formation and maintenance of vesicular membranes. The chain is Cholinephosphotransferase 1 from Rattus norvegicus (Rat).